A 388-amino-acid chain; its full sequence is Leucine aminopeptidase 1 (388 aa).

Positions 1–19 (MKLPALLILGVAASTMVLA) are cleaved as a signal peptide. The propeptide occupies 20 to 88 (AIAPDQVPLN…LPKVFPTPAV (69 aa)). Asn96, Asn119, Asn149, Asn164, and Asn181 each carry an N-linked (GlcNAc...) asparagine glycan. 2 residues coordinate Zn(2+): His189 and Asp207. The N-linked (GlcNAc...) asparagine glycan is linked to Asn232. Zn(2+) is bound by residues Glu246 and Asp273. A disulfide bond links Cys322 and Cys326. Residue His355 participates in Zn(2+) binding.

This sequence belongs to the peptidase M28 family. M28E subfamily. As to quaternary structure, monomer. Zn(2+) is required as a cofactor.

It is found in the secreted. Its function is as follows. Extracellular aminopeptidase that allows assimilation of proteinaceous substrates. The protein is Leucine aminopeptidase 1 (LAP1) of Paracoccidioides brasiliensis (strain Pb03).